The following is a 284-amino-acid chain: Bifunctional protein FolD (284 aa).

Residues 165–167, Ser190, and Ile231 each bind NADP(+); that span reads GRS.

This sequence belongs to the tetrahydrofolate dehydrogenase/cyclohydrolase family. As to quaternary structure, homodimer.

It catalyses the reaction (6R)-5,10-methylene-5,6,7,8-tetrahydrofolate + NADP(+) = (6R)-5,10-methenyltetrahydrofolate + NADPH. It carries out the reaction (6R)-5,10-methenyltetrahydrofolate + H2O = (6R)-10-formyltetrahydrofolate + H(+). Its pathway is one-carbon metabolism; tetrahydrofolate interconversion. Functionally, catalyzes the oxidation of 5,10-methylenetetrahydrofolate to 5,10-methenyltetrahydrofolate and then the hydrolysis of 5,10-methenyltetrahydrofolate to 10-formyltetrahydrofolate. The polypeptide is Bifunctional protein FolD (Dechloromonas aromatica (strain RCB)).